A 579-amino-acid chain; its full sequence is Probable cytochrome c biosynthesis protein (579 aa).

Belongs to the CcmF/CycK/Ccl1/NrfE/CcsA family.

It localises to the mitochondrion. In terms of biological role, could be involved in assembly and maturation of cytochromes c. May play a role in guidance of apocytochromes and heme groups for the covalent linkage introduced by the cytochrome-c-heme lyase. The sequence is that of Probable cytochrome c biosynthesis protein from Daucus carota (Wild carrot).